We begin with the raw amino-acid sequence, 380 residues long: Interleukin-13 receptor subunit alpha-2 (380 aa).

The N-terminal stretch at 1-26 is a signal peptide; the sequence is MAFVCLAIGCLYTFLISTTFGCTSSS. Residues 27 to 343 are Extracellular-facing; that stretch reads DTEIKVNPPQ…EDLSKKTLLR (317 aa). Fibronectin type-III domains follow at residues 34–134, 139–235, and 240–333; these read PPQD…SPQG, KVQD…LQNI, and PPVY…CWEG. The cysteines at positions 65 and 113 are disulfide-linked. N-linked (GlcNAc...) asparagine glycosylation occurs at N115. Intrachain disulfides connect C145/C155 and C184/C197. N-linked (GlcNAc...) asparagine glycans are attached at residues N215, N290, and N299. Residues C269 and C316 are joined by a disulfide bond. Residues 322-326 carry the WSXWS motif motif; it reads WSEWS. The chain crosses the membrane as a helical span at residues 344 to 363; the sequence is FWLPFGFILILVIFVTGLLL. Over 364–380 the chain is Cytoplasmic; that stretch reads RKPNTYPKMIPEFFCDT.

The protein belongs to the type I cytokine receptor family. Type 5 subfamily. Interacts with IL4RA. Interacts with high affinity to interleukin-13 (IL13), but not to interleukin-4 (IL4). In terms of processing, cleaved by MMP8 leading to a soluble form that is also able to interact with IL13.

The protein resides in the cell membrane. Cell surface receptor that plays a role in the regulation of IL-13-mediated responses. Functions as a decoy receptor that inhibits IL-13- and IL-4-mediated signal transduction via the JAK-STAT pathway and thereby modulates immune responses and inflammation. Serves as a functional signaling receptor for IL-13 in an alternative pathway involving AP-1 ultimately leading to the production of TGFB1. This chain is Interleukin-13 receptor subunit alpha-2 (IL13RA2), found in Homo sapiens (Human).